Here is a 421-residue protein sequence, read N- to C-terminus: MSSTGPGRRVCRQARIGHVLMGGTAPVVVQSMTNTDTADAAATALQVFDLWQAGSEVVRITVNSPEAAARVAEIRLRLDDMGCTAPLVGDFHFNGDRLLRDYPDCARALAKYRINPGNVGKGAKGDDKFAFMIRQAIEYDKAVRIGVNWGSLDQTLANRLMDENARRPHPLPAEAIMREALIISALDNAEKAVGLGLSPDQVILSCKVSHVQDLIAVYRELARRCDYALHLGLTEAGMGSKGIVASTAALSVLLQEGIGDTIRVSLTPEPGESRTKEVVVAQEILQTMGIRSFTPLVTACPGCGRTTSTFFQELAQRIQGYLREQMPLWRAEYPGVEMLNVAVMGCVVNGPGESKLADVGISLPGTGEVPVAPVYVDGEKTVTLKGERIAEEFQAIVDAYVRKNYGEGGAKRRRVIAVRPA.

The [4Fe-4S] cluster site is built by C300, C303, C346, and E353.

Belongs to the IspG family. The cofactor is [4Fe-4S] cluster.

The catalysed reaction is (2E)-4-hydroxy-3-methylbut-2-enyl diphosphate + oxidized [flavodoxin] + H2O + 2 H(+) = 2-C-methyl-D-erythritol 2,4-cyclic diphosphate + reduced [flavodoxin]. It participates in isoprenoid biosynthesis; isopentenyl diphosphate biosynthesis via DXP pathway; isopentenyl diphosphate from 1-deoxy-D-xylulose 5-phosphate: step 5/6. In terms of biological role, converts 2C-methyl-D-erythritol 2,4-cyclodiphosphate (ME-2,4cPP) into 1-hydroxy-2-methyl-2-(E)-butenyl 4-diphosphate. In Laribacter hongkongensis (strain HLHK9), this protein is 4-hydroxy-3-methylbut-2-en-1-yl diphosphate synthase (flavodoxin).